The primary structure comprises 285 residues: Glutamate racemase (285 aa).

Substrate contacts are provided by residues 30 to 31 (DS) and 62 to 63 (YG). The active-site Proton donor/acceptor is C94. 95 to 96 (NT) lines the substrate pocket. C206 acts as the Proton donor/acceptor in catalysis. Substrate is bound at residue 207–208 (TH).

This sequence belongs to the aspartate/glutamate racemases family.

The enzyme catalyses L-glutamate = D-glutamate. The protein operates within cell wall biogenesis; peptidoglycan biosynthesis. Functionally, provides the (R)-glutamate required for cell wall biosynthesis. The sequence is that of Glutamate racemase from Pectobacterium carotovorum subsp. carotovorum (strain PC1).